We begin with the raw amino-acid sequence, 101 residues long: NAD(P)H-quinone oxidoreductase subunit 4L, chloroplastic (101 aa).

Transmembrane regions (helical) follow at residues 2-22 (MFEH…YGLI), 32-52 (ICLE…SDLF), and 61-81 (IFAI…LSIL).

This sequence belongs to the complex I subunit 4L family. In terms of assembly, NDH is composed of at least 16 different subunits, 5 of which are encoded in the nucleus.

The protein localises to the plastid. Its subcellular location is the chloroplast thylakoid membrane. The enzyme catalyses a plastoquinone + NADH + (n+1) H(+)(in) = a plastoquinol + NAD(+) + n H(+)(out). The catalysed reaction is a plastoquinone + NADPH + (n+1) H(+)(in) = a plastoquinol + NADP(+) + n H(+)(out). Its function is as follows. NDH shuttles electrons from NAD(P)H:plastoquinone, via FMN and iron-sulfur (Fe-S) centers, to quinones in the photosynthetic chain and possibly in a chloroplast respiratory chain. The immediate electron acceptor for the enzyme in this species is believed to be plastoquinone. Couples the redox reaction to proton translocation, and thus conserves the redox energy in a proton gradient. The polypeptide is NAD(P)H-quinone oxidoreductase subunit 4L, chloroplastic (Oryza nivara (Indian wild rice)).